The primary structure comprises 689 residues: Beta-adrenergic receptor kinase 1 (689 aa).

The segment at 1–190 (MADLEAVLAD…ELNIHLTMND (190 aa)) is N-terminal. The 122-residue stretch at 54-175 (TFEKIFSQKL…IESDKFTRFC (122 aa)) folds into the RGS domain. One can recognise a Protein kinase domain in the interval 191-453 (FSVHRIIGRG…AQEVKESPFF (263 aa)). ATP-binding positions include 197–205 (IGRGGFGEV) and lysine 220. The Proton acceptor role is filled by aspartate 317. One can recognise an AGC-kinase C-terminal domain in the interval 454-521 (RSLDWQMVFL…TISERWQQEV (68 aa)). Residues 558-652 (DCIVHGYMSK…WKKELRDAYR (95 aa)) enclose the PH domain. Serine 670 carries the post-translational modification Phosphoserine.

It belongs to the protein kinase superfamily. AGC Ser/Thr protein kinase family. GPRK subfamily. Interacts with the heterodimer formed by GNB1 and GNG2. Interacts with GIT1. Interacts with, and phosphorylates chemokine-stimulated CCR5. Interacts with ARRB1. Interacts with LPAR1 and LPAR2. Interacts with RALA in response to LPAR1 activation. ADRBK1 and RALA mutually inhibit each other's binding to LPAR1. Interacts with ADRB2.

The protein localises to the cytoplasm. It is found in the cell membrane. The protein resides in the postsynapse. Its subcellular location is the presynapse. The enzyme catalyses [beta-adrenergic receptor] + ATP = [beta-adrenergic receptor]-phosphate + ADP + H(+). With respect to regulation, in contrast to other AGC family kinases, the catalytic activity is solely regulated by the binding of substrates and ligands, not by phosphorylation of the kinase domain. Functionally, specifically phosphorylates the agonist-occupied form of the beta-adrenergic and closely related receptors, probably inducing a desensitization of them. Key regulator of LPAR1 signaling. Competes with RALA for binding to LPAR1 thus affecting the signaling properties of the receptor. Desensitizes LPAR1 and LPAR2 in a phosphorylation-independent manner. Positively regulates ciliary smoothened (SMO)-dependent Hedgehog (Hh) signaling pathway by facilitating the trafficking of SMO into the cilium and the stimulation of SMO activity. Inhibits relaxation of airway smooth muscle in response to blue light. This is Beta-adrenergic receptor kinase 1 from Mus musculus (Mouse).